A 230-amino-acid chain; its full sequence is MADS-box transcription factor 50 (230 aa).

Residues 1–61 (MVRGKTQMKR…GKLYEFASAS (61 aa)) enclose the MADS-box domain. In terms of domain architecture, K-box spans 86-176 (IEQVKADADG…REKCKNQPPL (91 aa)). Residues 209-230 (GLPGRSRSSGGAAEDSQAMPHS) are disordered.

Expressed in mature leaves and at low levels in roots and young panicles.

It is found in the nucleus. Functionally, probable transcription factor active in flowering time control. May control internode elongation and promote floral transition phase. May act upstream of the floral regulators MADS1, MADS14, MADS15 and MADS18 in the floral induction pathway. The chain is MADS-box transcription factor 50 (MADS50) from Oryza sativa subsp. japonica (Rice).